We begin with the raw amino-acid sequence, 686 residues long: Acyl-CoA synthetase short-chain family member 3, mitochondrial (686 aa).

Residues 1-29 (MKPSWLQCHKVTSAGGLGGPLPGSSPARG) constitute a mitochondrion transit peptide. 227–230 (EPGR) lines the CoA pocket. ATP-binding positions include 425–427 (GER) and 446–451 (DHWWQT). Lys518 is modified (N6-succinyllysine). The residue at position 524 (Lys524) is an N6-acetyllysine. ATP is bound by residues Asp539, Arg554, and Arg565. Residue Arg624 participates in CoA binding.

This sequence belongs to the ATP-dependent AMP-binding enzyme family.

Its subcellular location is the mitochondrion matrix. The catalysed reaction is acetate + ATP + CoA = acetyl-CoA + AMP + diphosphate. The enzyme catalyses propanoate + ATP + CoA = propanoyl-CoA + AMP + diphosphate. It catalyses the reaction butanoate + ATP + CoA = butanoyl-CoA + AMP + diphosphate. Its function is as follows. Catalyzes the synthesis of acetyl-CoA from short-chain fatty acids. Propionate is the preferred substrate but can also utilize acetate and butyrate with a much lower affinity. This Pongo abelii (Sumatran orangutan) protein is Acyl-CoA synthetase short-chain family member 3, mitochondrial (ACSS3).